Here is a 303-residue protein sequence, read N- to C-terminus: E3 ubiquitin-protein ligase CHIP (303 aa).

Residues 1–10 (MKGKEEKEGG) are compositionally biased toward basic and acidic residues. Residues 1-30 (MKGKEEKEGGARLGAGGGSPEKSPSAQELK) are disordered. Lysine 2 is covalently cross-linked (Glycyl lysine isopeptide (Lys-Gly) (interchain with G-Cter in ubiquitin)). Serine 19 carries the phosphoserine modification. Residue lysine 22 forms a Glycyl lysine isopeptide (Lys-Gly) (interchain with G-Cter in ubiquitin) linkage. A phosphoserine mark is found at serine 23 and serine 25. 3 TPR repeats span residues 26–59 (AQEL…NPLV), 60–93 (AVYY…DGQS), and 95–127 (KAHF…AKEQ). The tract at residues 101–200 (GQCQLEMESY…SHVRAQQACI (100 aa)) is required for interaction with MAPK7. The required for interaction with and ubiquitination of MYOCD stretch occupies residues 142-196 (AKKKRWNSIEERRIHQESELHSYLSRLIAAERERELEECQRNHEGDEDDSHVRAQ). Residues 143 to 197 (KKKRWNSIEERRIHQESELHSYLSRLIAAERERELEECQRNHEGDEDDSHVRAQQ) form a required for interaction with FOXO1 region. The required for ubiquitination of FOXO1 stretch occupies residues 143-303 (KKKRWNSIEE…ISENGWVEDY (161 aa)). A Phosphoserine modification is found at serine 149. Glycyl lysine isopeptide (Lys-Gly) (interchain with G-Cter in ubiquitin) cross-links involve residues lysine 221 and lysine 255. Residues 226–300 (DIPDYLCGKI…DAFISENGWV (75 aa)) enclose the U-box domain. Serine 273 bears the Phosphoserine mark.

Homodimer. Interacts with BAG2. Interacts with E2 ubiquitin conjugating enzymes UBE2D1, UBE2D2 and UBE2D3. Detected in a ternary complex containing STUB1, HSPA1A and HSPBP1. Part of a complex composed of STUB1/CHIP, VCP/p97, CHRNA3, and UBXN2A that modulates the ubiquitination and endoplasmic reticulum-associated degradation (ERAD) of CHRNA3. Within the complex UBXN2A acts as a scaffold protein required for the interaction of CHRNA3 with VCP/p97, this interaction also inhibits CHRNA3 ubiquitination by STUB1/CHIP and subsequently ERAD. Interacts with MKKS. Interacts with DNAAF4. Interacts (when monoubiquitinated) with ATXN3. Interacts with UBE2W. Interacts (via the U-box domain) with the UBE2V2-UBE2N heterodimer; the complex has a specific 'Lys-63'-linked polyubiquitination activity. Interacts with DNAJB6. Interacts with FLCN. Interacts with HSP90AA1. Interacts with HSP90. Interacts with UBE2N and UBE2V1. Interacts (via TPR repeats) with HSPA8 (via C-terminus). Interacts (via TPR repeats) with HSPA1A (via C-terminus). Interacts with the non-acetylated form of HSPA1A and HSPA1B. Interacts with SMAD3 and HSP90AB1. Interacts with UBE4B. Interacts with PRMT5. Interacts with MYOCD (via C-terminus). Interacts with FOXO1 (when phosphorylated on 'Ser-256'). Interacts with MAPK7/ERK5; the interaction is enhanced in the presence of IGF1 or MAP2K5 and promotes STUB1/CHIP E3 ligase activity. Interacts with and ubiquitinates ESR1; the interaction is promoted in the absence of estradiol (17-beta-estradiol/E2). Interacts with ESR2. Interacts with and ubiquitinates NFATC3; HSPA1A/HSP70 is required as a co-chaperone. In macrophages, interacts with PAQR3; the interaction promotes PPARG poylubiquitination and STUB1-mediated degradation. Component of the chaperone-assisted selective autophagy (CASA) complex consisting of BAG3, HSPA8/HSC70, HSPB8 and STUB1/CHIP. Monoubiquitinated at Lys-2 following cell stress by UBE2W, promoting the interaction with ATXN3. Auto-ubiquitinated; mediated by UBE2D1 and UBE2D2 and enhanced in the presence of MAP2K5. Expressed in differentiated myotubes (at protein level). Highly expressed in skeletal muscle, heart, pancreas, brain and placenta. Detected in kidney, liver and lung.

The protein localises to the cytoplasm. It localises to the nucleus. The protein resides in the mitochondrion. It catalyses the reaction S-ubiquitinyl-[E2 ubiquitin-conjugating enzyme]-L-cysteine + [acceptor protein]-L-lysine = [E2 ubiquitin-conjugating enzyme]-L-cysteine + N(6)-ubiquitinyl-[acceptor protein]-L-lysine.. Its pathway is protein modification; protein ubiquitination. E3 ubiquitin-protein ligase which targets misfolded chaperone substrates towards proteasomal degradation. Plays a role in the maintenance of mitochondrial morphology and promotes mitophagic removal of dysfunctional mitochondria; thereby acts as a protector against apoptosis in response to cellular stress. Negatively regulates vascular smooth muscle contraction, via degradation of the transcriptional activator MYOCD and subsequent loss of transcription of genes involved in vascular smooth muscle contraction. Promotes survival and proliferation of cardiac smooth muscle cells via ubiquitination and degradation of FOXO1, resulting in subsequent repression of FOXO1-mediated transcription of pro-apoptotic genes. Ubiquitinates ICER-type isoforms of CREM and targets them for proteasomal degradation, thereby acts as a positive effector of MAPK/ERK-mediated inhibition of apoptosis in cardiomyocytes. Inhibits lipopolysaccharide-induced apoptosis and hypertrophy in cardiomyocytes, via ubiquitination and subsequent proteasomal degradation of NFATC3. Collaborates with ATXN3 in the degradation of misfolded chaperone substrates: ATXN3 restricting the length of ubiquitin chain attached to STUB1/CHIP substrates and preventing further chain extension. Ubiquitinates NOS1 in concert with Hsp70 and Hsp40. Modulates the activity of several chaperone complexes, including Hsp70, Hsc70 and Hsp90. Ubiquitinates CHRNA3 targeting it for endoplasmic reticulum-associated degradation in cortical neurons, as part of the STUB1-VCP-UBXN2A complex. Ubiquitinates and promotes ESR1 proteasomal degradation in response to age-related circulating estradiol (17-beta-estradiol/E2) decline, thereby promotes neuronal apoptosis in response to ischemic reperfusion injury. Mediates transfer of non-canonical short ubiquitin chains to HSPA8 that have no effect on HSPA8 degradation. Mediates polyubiquitination of DNA polymerase beta (POLB) at 'Lys-41', 'Lys-61' and 'Lys-81', thereby playing a role in base-excision repair: catalyzes polyubiquitination by amplifying the HUWE1/ARF-BP1-dependent monoubiquitination and leading to POLB-degradation by the proteasome. Mediates polyubiquitination of CYP3A4. Ubiquitinates EPHA2 and may regulate the receptor stability and activity through proteasomal degradation. Acts as a co-chaperone for HSPA1A and HSPA1B chaperone proteins and promotes ubiquitin-mediated protein degradation. Negatively regulates the suppressive function of regulatory T-cells (Treg) during inflammation by mediating the ubiquitination and degradation of FOXP3 in a HSPA1A/B-dependent manner. Catalyzes monoubiquitination of SIRT6, preventing its degradation by the proteasome. Likely mediates polyubiquitination and down-regulates plasma membrane expression of PD-L1/CD274, an immune inhibitory ligand critical for immune tolerance to self and antitumor immunity. Negatively regulates TGF-beta signaling by modulating the basal level of SMAD3 via ubiquitin-mediated degradation. Plays a role in the degradation of TP53. Mediates ubiquitination of RIPK3 leading to its subsequent proteasome-dependent degradation. May regulate myosin assembly in striated muscles together with UBE4B and VCP/p97 by targeting myosin chaperone UNC45B for proteasomal degradation. Ubiquitinates PPARG in macrophages playing a role in M2 macrophages polarization and angiogenesis. This chain is E3 ubiquitin-protein ligase CHIP, found in Homo sapiens (Human).